The sequence spans 118 residues: MALSPRESAVRRAQRTRTRLKALSNGRPRLSVFRSSKNIYAQVIDDERGVTLASASTLEGEAATKGADKDAAALVGKLVAERAIEKGVKDVVFDRGGYIFHGRVKALADAAREAGLNF.

This sequence belongs to the universal ribosomal protein uL18 family. In terms of assembly, part of the 50S ribosomal subunit; part of the 5S rRNA/L5/L18/L25 subcomplex. Contacts the 5S and 23S rRNAs.

This is one of the proteins that bind and probably mediate the attachment of the 5S RNA into the large ribosomal subunit, where it forms part of the central protuberance. The protein is Large ribosomal subunit protein uL18 of Caulobacter sp. (strain K31).